The primary structure comprises 495 residues: Endolysin LysK (495 aa).

A Peptidase C51 domain is found at 29–160 (ATSYDPSFGV…NYYGLTHFIE (132 aa)). Residues Asp-45, Asp-47, Tyr-49, and His-51 each contribute to the Ca(2+) site. Cys-54 serves as the catalytic For endopeptidase activity. Asp-56 is a binding site for Ca(2+). Residues His-117 and Glu-134 each act as for endopeptidase activity in the active site. Positions 205-334 (GKKPEGMVIH…MEFVPTACPH (130 aa)) constitute an N-acetylmuramoyl-L-alanine amidase domain. Zn(2+)-binding residues include His-214, His-324, and Cys-332. Polar residues predominate over residues 378–393 (STVVKDGKTSSASTPA). The segment at 378–398 (STVVKDGKTSSASTPATRPVT) is disordered. The 70-residue stretch at 412 to 481 (PENATFVNGN…YCPVRTCQGV (70 aa)) folds into the SH3b domain.

This sequence belongs to the N-acetylmuramoyl-L-alanine amidase 2 family. The cofactor is Zn(2+).

It carries out the reaction Hydrolyzes the link between N-acetylmuramoyl residues and L-amino acid residues in certain cell-wall glycopeptides.. Functionally, endolysin that degrades host peptidoglycans and participates in the sequential events which lead to the programmed host cell lysis releasing the mature viral particles. Exhibits lytic activity against Staphylococcus aureus. The CHAP activity cleaves the peptidic bond between the D-alanine of the tetra-peptide stem and the first glycine of the penta-glycine cross-bridge. The N-acetyl-muramidase activity cleaves between N-acetylmuramic acid and N-acetylglucosamine bonds. The chain is Endolysin LysK from Staphylococcus aureus.